The following is an 833-amino-acid chain: Homeobox-leucine zipper protein ATHB-8 (833 aa).

The segment at residues Asp-12–Lys-75 is a DNA-binding region (homeobox). Positions Arg-70–Leu-108 form a coiled coil. The START domain occupies Arg-150–Val-378.

It belongs to the HD-ZIP homeobox family. Class III subfamily. Interacts with ESR1 and ESR2. Interacts with ZPR3.

It localises to the nucleus. In terms of biological role, probable transcription factor involved in the regulation of vascular development. May promote differentiation of precambial and cambial cells. This chain is Homeobox-leucine zipper protein ATHB-8 (ATHB-8), found in Arabidopsis thaliana (Mouse-ear cress).